Here is a 707-residue protein sequence, read N- to C-terminus: Polyribonucleotide nucleotidyltransferase (707 aa).

Mg(2+)-binding residues include D491 and D497. Residues 558 to 617 (PRIEKIKIHPDKIGLLIGPGGKTIKKISAESGAEITIEDDGTVMIYSSSADSLEAAREMI) enclose the KH domain. The 74-residue stretch at 622 to 695 (GEVTVGGIYR…EKGRYKFSRK (74 aa)) folds into the S1 motif domain.

The protein belongs to the polyribonucleotide nucleotidyltransferase family. Mg(2+) is required as a cofactor.

It is found in the cytoplasm. It carries out the reaction RNA(n+1) + phosphate = RNA(n) + a ribonucleoside 5'-diphosphate. Involved in mRNA degradation. Catalyzes the phosphorolysis of single-stranded polyribonucleotides processively in the 3'- to 5'-direction. The protein is Polyribonucleotide nucleotidyltransferase of Methylacidiphilum infernorum (isolate V4) (Methylokorus infernorum (strain V4)).